The primary structure comprises 309 residues: Elongation factor Ts (309 aa).

Residues 82-85 (TDFV) form an involved in Mg(2+) ion dislocation from EF-Tu region.

It belongs to the EF-Ts family.

Its subcellular location is the cytoplasm. Functionally, associates with the EF-Tu.GDP complex and induces the exchange of GDP to GTP. It remains bound to the aminoacyl-tRNA.EF-Tu.GTP complex up to the GTP hydrolysis stage on the ribosome. In Rickettsia akari (strain Hartford), this protein is Elongation factor Ts.